Reading from the N-terminus, the 131-residue chain is Large-conductance mechanosensitive channel (131 aa).

A run of 3 helical transmembrane segments spans residues 14–34 (IMDL…VTSL), 38–58 (IIMP…LAVT), and 67–87 (GSFI…FIVI).

It belongs to the MscL family. As to quaternary structure, homopentamer.

It is found in the cell membrane. Functionally, channel that opens in response to stretch forces in the membrane lipid bilayer. May participate in the regulation of osmotic pressure changes within the cell. This Bacillus velezensis (strain DSM 23117 / BGSC 10A6 / LMG 26770 / FZB42) (Bacillus amyloliquefaciens subsp. plantarum) protein is Large-conductance mechanosensitive channel.